The following is a 331-amino-acid chain: 6-phosphogluconolactonase (331 aa).

Belongs to the cycloisomerase 2 family.

The enzyme catalyses 6-phospho-D-glucono-1,5-lactone + H2O = 6-phospho-D-gluconate + H(+). It participates in carbohydrate degradation; pentose phosphate pathway; D-ribulose 5-phosphate from D-glucose 6-phosphate (oxidative stage): step 2/3. Its function is as follows. Catalyzes the hydrolysis of 6-phosphogluconolactone to 6-phosphogluconate. In Salmonella gallinarum (strain 287/91 / NCTC 13346), this protein is 6-phosphogluconolactonase.